A 154-amino-acid chain; its full sequence is uncharacterized protein (154 aa).

3 helical membrane passes run 26 to 48, 97 to 119, and 132 to 150; these read VSGW…GVVT, IAMF…LIVF, and GLYT…YCAW.

The protein resides in the cell membrane. This is an uncharacterized protein from Archaeoglobus fulgidus (strain ATCC 49558 / DSM 4304 / JCM 9628 / NBRC 100126 / VC-16).